The sequence spans 333 residues: 5-formaminoimidazole-4-carboxamide-1-(beta)-D-ribofuranosyl 5'-monophosphate synthetase (333 aa).

5-amino-1-(5-phospho-beta-D-ribosyl)imidazole-4-carboxamide-binding residues include His10 and Ser74. The ATP-grasp domain occupies Arg95–Asn324. ATP-binding positions include Val125 to Tyr185 and Glu207. Asn230 contacts 5-amino-1-(5-phospho-beta-D-ribosyl)imidazole-4-carboxamide. Positions 269 and 282 each coordinate Mg(2+).

This sequence belongs to the phosphohexose mutase family. It depends on Mg(2+) as a cofactor. The cofactor is Mn(2+).

It catalyses the reaction 5-amino-1-(5-phospho-beta-D-ribosyl)imidazole-4-carboxamide + formate + ATP = 5-formamido-1-(5-phospho-D-ribosyl)imidazole-4-carboxamide + ADP + phosphate. It functions in the pathway purine metabolism; IMP biosynthesis via de novo pathway; 5-formamido-1-(5-phospho-D-ribosyl)imidazole-4-carboxamide from 5-amino-1-(5-phospho-D-ribosyl)imidazole-4-carboxamide (formate route): step 1/1. Catalyzes the ATP- and formate-dependent formylation of 5-aminoimidazole-4-carboxamide-1-beta-d-ribofuranosyl 5'-monophosphate (AICAR) to 5-formaminoimidazole-4-carboxamide-1-beta-d-ribofuranosyl 5'-monophosphate (FAICAR) in the absence of folates. The protein is 5-formaminoimidazole-4-carboxamide-1-(beta)-D-ribofuranosyl 5'-monophosphate synthetase of Sulfolobus acidocaldarius (strain ATCC 33909 / DSM 639 / JCM 8929 / NBRC 15157 / NCIMB 11770).